The primary structure comprises 127 residues: Small ribosomal subunit protein uS11 (127 aa).

The protein belongs to the universal ribosomal protein uS11 family. In terms of assembly, part of the 30S ribosomal subunit. Interacts with proteins S7 and S18. Binds to IF-3.

Functionally, located on the platform of the 30S subunit, it bridges several disparate RNA helices of the 16S rRNA. Forms part of the Shine-Dalgarno cleft in the 70S ribosome. This chain is Small ribosomal subunit protein uS11, found in Chlorobium phaeobacteroides (strain BS1).